A 361-amino-acid polypeptide reads, in one-letter code: Inhibin alpha chain (361 aa).

The first 21 residues, 1–21 (MLPLLLPLQLLLLMVMKGGHG), serve as a signal peptide directing secretion. A propeptide spanning residues 22–64 (CQGPELDRELVLAKVRALVLDALGPPNASKDGGKPVAQRLTRR) is cleaved from the precursor. Residues 45 to 82 (GPPNASKDGGKPVAQRLTRRHAHTGGSTRRSMENEDED) are disordered. N-linked (GlcNAc...) asparagine glycans are attached at residues Asn-48, Asn-144, and Asn-266. Residues 65–230 (HAHTGGSTRR…PPSVGERARR (166 aa)) constitute a propeptide, inhibin alpha N-terminal region. Disulfide bonds link Cys-260/Cys-323, Cys-289/Cys-358, and Cys-293/Cys-360.

It belongs to the TGF-beta family. As to quaternary structure, dimeric, linked by one or more disulfide bonds. Activin B is a dimer of alpha and beta-B. Inhibin A is a dimer of alpha and beta-A. Inhibin B is a dimer of alpha and beta-B. Interacts with TGFBR3L; this interaction regulates female fertility. Post-translationally, proteolytic processing yields a number of bioactive forms, consisting either solely of the mature alpha chain, of the most N-terminal propeptide linked through a disulfide bond to the mature alpha chain, or of the entire proprotein.

It is found in the secreted. Its function is as follows. Inhibins and activins inhibit and activate, respectively, the secretion of follitropin by the pituitary gland. Inhibins/activins are involved in regulating a number of diverse functions such as hypothalamic and pituitary hormone secretion, gonadal hormone secretion, germ cell development and maturation, erythroid differentiation, insulin secretion, nerve cell survival, embryonic axial development or bone growth, depending on their subunit composition. Inhibins appear to oppose the functions of activins. Inhibin A is a dimer of alpha/INHA and beta-A/INHBA that functions as a feedback regulator in the hypothalamic-pituitary-gonadal (HPG) axis. Inhibits the secretion of FSH from the anterior pituitary gland by acting on pituitary gonadotrope cells. Antagonizes activin A by binding to the proteoglycan, betaglycan, and forming a stable complex with and, thereby, sequestering type II activin receptors while excluding type I receptor. Functionally, inhibin B is a dimer of alpha and beta-B that plays a crucial role in the regulation of the reproductive system by inhibiting the secretion of follicle-stimulating hormone (FSH) from the anterior pituitary gland. Thereby, maintains reproductive homeostasis in both males and females. Acts as a more potent suppressor of FSH release than inhibin A. Functions as competitive receptor antagonist binding activin type II receptors with high affinity in the presence of the TGF-beta type III coreceptor/TGFBR3L. This chain is Inhibin alpha chain (INHA), found in Trichosurus vulpecula (Brush-tailed possum).